The following is a 208-amino-acid chain: MLAETLVAPGDKVLDAIGEYRMGKGLYEANRRIFASVAGFVNVYGFRDKSDNLVQVIEVRRSEDQLDNELLPFHGAIVTAKVMAVGLRFAKCDIISIGDKVYKKRFSALLPKKKLRPLEPELSEPFKNFVRPNDYILAKVCEDAEIKDKFVLSIAEDELGVVLCRGRFGEPMQKVDWNTVVSTRTGKTEPRKMAKVPQKCTLPTQSVA.

In terms of assembly, component of the RNA exosome complex. As to expression, ubiquitously expressed.

The protein resides in the nucleus. The protein localises to the nucleolus. Its subcellular location is the nucleoplasm. Non-catalytic component of the RNA exosome complex which has 3'-&gt;5' exoribonuclease activity and participates in a multitude of cellular RNA processing and degradation events. Involved in regulation of antisense ribosomal siRNA production. Involved in response to cold-warm shock. This is Exosome complex component CSL4 homolog from Caenorhabditis elegans.